The primary structure comprises 270 residues: Centromere protein Q (270 aa).

The segment at 1–59 is disordered; that stretch reads MSGKANTSKKKSQRVKRNVKQRADKEDEELDSPENKVGNRAKRNRSHAGHLSSKEQTKC. Composition is skewed to basic residues over residues 7–20 and 39–48; these read TSKK…RNVK and NRAKRNRSHA. Phosphoserine is present on S52. Positions 143-205 form a coiled coil; sequence LKVEREQERA…EEEMKEVFHI (63 aa).

The protein belongs to the CENP-Q/OKP1 family. Component of the CENPA-CAD complex, composed of CENPI, CENPK, CENPL, CENPO, CENPP, CENPQ, CENPR and CENPS. The CENPA-CAD complex interacts with the CENPA-NAC complex, at least composed of CENPA, CENPC, CENPH, CENPM, CENPN, CENPT and CENPU. Phosphorylation at Ser-52 is essential for CENPE recruitment to kinetochores and orderly chromosome congression.

It is found in the nucleus. The protein localises to the chromosome. It localises to the centromere. Its function is as follows. Component of the CENPA-CAD (nucleosome distal) complex, a complex recruited to centromeres which is involved in assembly of kinetochore proteins, mitotic progression and chromosome segregation. May be involved in incorporation of newly synthesized CENPA into centromeres via its interaction with the CENPA-NAC complex. Plays an important role in chromosome congression and in the recruitment of CENP-O complex (which comprises CENPO, CENPP, CENPQ and CENPU), CENPE and PLK1 to the kinetochores. The protein is Centromere protein Q (Cenpq) of Rattus norvegicus (Rat).